A 638-amino-acid polypeptide reads, in one-letter code: Threonine--tRNA ligase (638 aa).

A TGS domain is found at 1-61 (MPIITLPDGT…DYDAEIKIIT (61 aa)). The segment at 242–533 (DHRKIGKKMD…LIENYAGNFP (292 aa)) is catalytic. Zn(2+)-binding residues include Cys333, His384, and His510.

Belongs to the class-II aminoacyl-tRNA synthetase family. As to quaternary structure, homodimer. It depends on Zn(2+) as a cofactor.

The protein localises to the cytoplasm. The enzyme catalyses tRNA(Thr) + L-threonine + ATP = L-threonyl-tRNA(Thr) + AMP + diphosphate + H(+). In terms of biological role, catalyzes the attachment of threonine to tRNA(Thr) in a two-step reaction: L-threonine is first activated by ATP to form Thr-AMP and then transferred to the acceptor end of tRNA(Thr). Also edits incorrectly charged L-seryl-tRNA(Thr). This Prochlorococcus marinus (strain MIT 9211) protein is Threonine--tRNA ligase.